The primary structure comprises 63 residues: Large ribosomal subunit protein bL32 (63 aa).

Belongs to the bacterial ribosomal protein bL32 family.

In Acholeplasma laidlawii, this protein is Large ribosomal subunit protein bL32.